The following is a 653-amino-acid chain: Macrolide export ATP-binding/permease protein MacB (653 aa).

Residues 6–244 (LQLTRVTRRF…DAAPDASGGA (239 aa)) enclose the ABC transporter domain. 42–49 (GASGSGKS) provides a ligand contact to ATP. 4 consecutive transmembrane segments (helical) span residues 278–298 (LLTM…VAIG), 526–546 (LTLL…IGVM), 587–607 (MGGA…SLFV), and 616–636 (AASI…FGFM).

This sequence belongs to the ABC transporter superfamily. Macrolide exporter (TC 3.A.1.122) family. In terms of assembly, homodimer.

It localises to the cell inner membrane. Functionally, non-canonical ABC transporter that contains transmembrane domains (TMD), which form a pore in the inner membrane, and an ATP-binding domain (NBD), which is responsible for energy generation. Confers resistance against macrolides. The protein is Macrolide export ATP-binding/permease protein MacB of Burkholderia pseudomallei (strain 1710b).